A 160-amino-acid polypeptide reads, in one-letter code: 3-dehydroquinate dehydratase (160 aa).

The active-site Proton acceptor is the Tyr22. Substrate is bound by residues Asn73, His79, and Asp86. His99 (proton donor) is an active-site residue. Substrate contacts are provided by residues 100-101 (IS) and Arg110.

Belongs to the type-II 3-dehydroquinase family. Homododecamer.

It carries out the reaction 3-dehydroquinate = 3-dehydroshikimate + H2O. It participates in metabolic intermediate biosynthesis; chorismate biosynthesis; chorismate from D-erythrose 4-phosphate and phosphoenolpyruvate: step 3/7. Its function is as follows. Catalyzes a trans-dehydration via an enolate intermediate. This chain is 3-dehydroquinate dehydratase, found in Campylobacter lari (strain RM2100 / D67 / ATCC BAA-1060).